We begin with the raw amino-acid sequence, 275 residues long: Diaminopimelate epimerase (275 aa).

Residues asparagine 20 and asparagine 63 each coordinate substrate. The active-site Proton donor is cysteine 72. Residues 73–74, asparagine 179, and 197–198 contribute to the substrate site; these read GN and ER. Cysteine 207 acts as the Proton acceptor in catalysis. Residue 208 to 209 participates in substrate binding; it reads GT.

The protein belongs to the diaminopimelate epimerase family. In terms of assembly, homodimer.

It is found in the cytoplasm. The enzyme catalyses (2S,6S)-2,6-diaminopimelate = meso-2,6-diaminopimelate. The protein operates within amino-acid biosynthesis; L-lysine biosynthesis via DAP pathway; DL-2,6-diaminopimelate from LL-2,6-diaminopimelate: step 1/1. In terms of biological role, catalyzes the stereoinversion of LL-2,6-diaminopimelate (L,L-DAP) to meso-diaminopimelate (meso-DAP), a precursor of L-lysine and an essential component of the bacterial peptidoglycan. The protein is Diaminopimelate epimerase of Chlamydia trachomatis serovar L2 (strain ATCC VR-902B / DSM 19102 / 434/Bu).